A 421-amino-acid chain; its full sequence is G/T mismatch-specific thymine DNA glycosylase (421 aa).

The disordered stretch occupies residues Pro45–Lys108. Residues Arg77–Lys89 are compositionally biased toward basic and acidic residues. A compositionally biased stretch (basic residues) spans Ala91 to Thr100. Residues Lys114 and Lys259 each participate in a glycyl lysine isopeptide (Lys-Gly) (interchain with G-Cter in SUMO2) cross-link. Lys341 is covalently cross-linked (Glycyl lysine isopeptide (Lys-Gly) (interchain with G-Cter in SUMO); alternate). Lys341 is covalently cross-linked (Glycyl lysine isopeptide (Lys-Gly) (interchain with G-Cter in SUMO2); alternate).

The protein belongs to the uracil-DNA glycosylase (UDG) superfamily. TDG/mug family. Homodimer. Interacts with AICDA and GADD45A. Sumoylation on Lys-341 by either SUMO1 or SUMO2 induces dissociation of the product DNA.

Its subcellular location is the nucleus. It carries out the reaction Hydrolyzes mismatched double-stranded DNA and polynucleotides, releasing free thymine.. Its function is as follows. DNA glycosylase that plays a key role in active DNA demethylation: specifically recognizes and binds 5-formylcytosine (5fC) and 5-carboxylcytosine (5caC) in the context of CpG sites and mediates their excision through base-excision repair (BER) to install an unmethylated cytosine. Cannot remove 5-hydroxymethylcytosine (5hmC). According to an alternative model, involved in DNA demethylation by mediating DNA glycolase activity toward 5-hydroxymethyluracil (5hmU) produced by deamination of 5hmC. Also involved in DNA repair by acting as a thymine-DNA glycosylase that mediates correction of G/T mispairs to G/C pairs: in the DNA of higher eukaryotes, hydrolytic deamination of 5-methylcytosine to thymine leads to the formation of G/T mismatches. Its role in the repair of canonical base damage is however minor compared to its role in DNA demethylation. It is capable of hydrolyzing the carbon-nitrogen bond between the sugar-phosphate backbone of the DNA and a mispaired thymine. In addition to the G/T, it can remove thymine also from C/T and T/T mispairs in the order G/T &gt;&gt; C/T &gt; T/T. It has no detectable activity on apyrimidinic sites and does not catalyze the removal of thymine from A/T pairs or from single-stranded DNA. It can also remove uracil and 5-bromouracil from mispairs with guanine. This is G/T mismatch-specific thymine DNA glycosylase (Tdg) from Mus musculus (Mouse).